Reading from the N-terminus, the 285-residue chain is SLAM family member 8 (285 aa).

A signal peptide spans 1 to 22 (MVMRPLWSLLLWEALLPITVTG). Over 23 to 233 (AQVLSKVGGS…AAPGKASYKD (211 aa)) the chain is Extracellular. An N-linked (GlcNAc...) asparagine glycan is attached at N85. An Ig-like C2-type domain is found at 128-215 (PVVQVFIAVE…PVSWDLATVT (88 aa)). C152 and C201 are disulfide-bonded. Residues 234–254 (VLLVVVPVSLLLMLVTLFSAW) traverse the membrane as a helical segment. Over 255–285 (HWCPCSGKKKKDVHADRVGPETENPLVQDLP) the chain is Cytoplasmic. The tract at residues 262-285 (KKKKDVHADRVGPETENPLVQDLP) is disordered.

In terms of tissue distribution, expressed in lymph node, spleen, thymus and bone marrow.

The protein localises to the membrane. May play a role in B-lineage commitment and/or modulation of signaling through the B-cell receptor. In Homo sapiens (Human), this protein is SLAM family member 8 (SLAMF8).